Reading from the N-terminus, the 59-residue chain is MLTWALIFFIIAIIAAAFGFGGIAVAAAGIAKILFFLFLVMFVIFLIMGLLGRRGPPPV.

2 helical membrane passes run A5 to V25 and I30 to L50.

This sequence belongs to the UPF0391 family.

It localises to the cell membrane. This Legionella pneumophila (strain Corby) protein is UPF0391 membrane protein LPC_1949.